We begin with the raw amino-acid sequence, 631 residues long: Sperm-associated antigen 16 protein (631 aa).

Residues 152–267 are a coiled coil; that stretch reads DVYTQIMLLE…LQETLKKLQR (116 aa). A disordered region spans residues 266–332; that stretch reads QRGHSYHGPQ…QPNPNLNVSK (67 aa). Basic and acidic residues-rich tracts occupy residues 277-287 and 295-304; these read KVDHSREKENA and GLREAREQNK. 7 WD repeats span residues 350-389, 392-431, 434-473, 476-515, 518-557, 560-600, and 601-630; these read LHELPVSCVSMQPHKDILVSCGEDRLWKVLGLPKCNVLLT, GHTDWLSDCCFHPSGDKLATSSGDTTVKLWDLCKGDCILT, GHSRAVWSCTWHSCGNFVASSSLDKTSKIWDVNSERCRCT, GHTDSVNSIEFFPFSNTLLTSSADKTLSIWDARTGICEQS, GHMHSINDAIFDPRGHMIASCDACGVTKLWDFRKLLPIVS, IGPS…HKLM, and GHENEAHTVVFSHDGEILFSGGSDGTVRTW.

In terms of assembly, interacts with SPAG6 and STK36. In terms of processing, phosphorylated by TSSK2. As to expression, isoform 1 is detected in testis. Isoform 4 is detected in testis and brain, and at lower levels in kidney, heart, pancreas, thyroid, ovary, adrenal gland, spinal cord, trachea and liver.

The protein localises to the cytoplasm. It is found in the cytoskeleton. It localises to the flagellum axoneme. Its subcellular location is the cilium axoneme. The protein resides in the cell projection. The protein localises to the cilium. It is found in the flagellum. Its function is as follows. Necessary for sperm flagellar function. Plays a role in motile ciliogenesis. May help to recruit STK36 to the cilium or apical surface of the cell to initiate subsequent steps of construction of the central pair apparatus of motile cilia. The chain is Sperm-associated antigen 16 protein (SPAG16) from Homo sapiens (Human).